Reading from the N-terminus, the 751-residue chain is Oxysterol-binding protein-related protein 11 (751 aa).

Methionine 1 carries the N-acetylmethionine modification. Residues 1 to 57 form a disordered region; the sequence is MQGGEPASVMKVSESEGKLEGLATAVTPNKNSGNSSCGGAISSSSSNSSRGGSAKGW. Serine 15 bears the Phosphoserine mark. Residue threonine 27 is modified to Phosphothreonine. Positions 31-52 are enriched in low complexity; the sequence is NSGNSSCGGAISSSSSNSSRGG. One can recognise a PH domain in the interval 63 to 160; that stretch reads MESVNGYLMK…WVSRLQICTQ (98 aa). Phosphoserine occurs at positions 177, 179, 182, 186, 189, and 194. Disordered regions lie at residues 475-497 and 694-716; these read SGVS…EEAP and EIDK…ERLR.

Belongs to the OSBP family. In terms of assembly, heterodimer with OSBPL9.

It is found in the late endosome membrane. The protein localises to the golgi apparatus. Its subcellular location is the trans-Golgi network membrane. It catalyses the reaction a 1,2-diacyl-sn-glycero-3-phospho-(1D-myo-inositol 4-phosphate)(out) + a 1,2-diacyl-sn-glycero-3-phospho-L-serine(in) = a 1,2-diacyl-sn-glycero-3-phospho-(1D-myo-inositol 4-phosphate)(in) + a 1,2-diacyl-sn-glycero-3-phospho-L-serine(out). Its function is as follows. Plays a role in regulating ADIPOQ and FABP4 levels in differentiating adipocytes and is also involved in regulation of adipocyte triglyceride storage. Weakly binds 25-hydroxycholesterol. Interacts with OSBPL9 to function as lipid transfer proteins. Together they form a heterodimer that localizes at the ER-trans-Golgi membrane contact sites, and exchanges phosphatidylserine (1,2-diacyl-sn-glycero-3-phospho-L-serine, PS) for phosphatidylinositol-4-phosphate (1,2-diacyl-sn-glycero-3-phospho-(1D-myo-inositol 4-phosphate), PI(4)P) between the two organelles, a step that is critical for sphingomyelin synthesis in the Golgi complex. This is Oxysterol-binding protein-related protein 11 (Osbpl11) from Mus musculus (Mouse).